The following is a 276-amino-acid chain: 4-deoxy-L-threo-5-hexosulose-uronate ketol-isomerase 2 (276 aa).

Residues His-194, His-196, Glu-201, and His-243 each contribute to the Zn(2+) site.

It belongs to the KduI family. Zn(2+) serves as cofactor.

The catalysed reaction is 5-dehydro-4-deoxy-D-glucuronate = 3-deoxy-D-glycero-2,5-hexodiulosonate. It functions in the pathway glycan metabolism; pectin degradation; 2-dehydro-3-deoxy-D-gluconate from pectin: step 4/5. In terms of biological role, catalyzes the isomerization of 5-dehydro-4-deoxy-D-glucuronate to 3-deoxy-D-glycero-2,5-hexodiulosonate. This Enterococcus faecalis (strain ATCC 700802 / V583) protein is 4-deoxy-L-threo-5-hexosulose-uronate ketol-isomerase 2 (kduI2).